The sequence spans 208 residues: Ribosomal RNA large subunit methyltransferase E (208 aa).

Positions 63, 65, 83, 99, and 124 each coordinate S-adenosyl-L-methionine. K164 (proton acceptor) is an active-site residue.

Belongs to the class I-like SAM-binding methyltransferase superfamily. RNA methyltransferase RlmE family.

It localises to the cytoplasm. The catalysed reaction is uridine(2552) in 23S rRNA + S-adenosyl-L-methionine = 2'-O-methyluridine(2552) in 23S rRNA + S-adenosyl-L-homocysteine + H(+). Functionally, specifically methylates the uridine in position 2552 of 23S rRNA at the 2'-O position of the ribose in the fully assembled 50S ribosomal subunit. This Salmonella arizonae (strain ATCC BAA-731 / CDC346-86 / RSK2980) protein is Ribosomal RNA large subunit methyltransferase E.